We begin with the raw amino-acid sequence, 744 residues long: Prestin (744 aa).

Over 1–75 (MDHAEENEIP…PITKWLPAYK (75 aa)) the chain is Cytoplasmic. Residues 76-104 (FKEYVLGDLVSGISTGVLQLPQGLAFAML) traverse the membrane as a helical segment. Over 105-108 (AAVP) the chain is Extracellular. The helical transmembrane segment at 109-126 (PVFGLYSSFYPVIMYCFF) threads the bilayer. The Cytoplasmic portion of the chain corresponds to 127 to 137 (GTSRHISIGPF). A helical membrane pass occupies residues 138-149 (AVISLMIGGVAV). At 150–168 (RLVPDDIVIPGGVNATNGT) the chain is on the extracellular side. The Involved in motor function signature appears at 158 to 168 (IPGGVNATNGT). 2 N-linked (GlcNAc...) asparagine glycosylation sites follow: Asn163 and Asn166. A helical membrane pass occupies residues 169–196 (EARDALRVKVAMSVTLLSGIIQFCLGVC). At 197–206 (RFGFVAIYLT) the chain is on the cytoplasmic side. The helical transmembrane segment at 207 to 230 (EPLVRGFTTAAAVHVFTSMLKYLF) threads the bilayer. At 231-241 (GVKTKRYSGIF) the chain is on the extracellular side. The helical intramembrane region spans 242-253 (SVVYSTVAVLQN). Residues 254 to 258 (VKNLN) lie on the Extracellular side of the membrane. A helical transmembrane segment spans residues 259-276 (VCSLGVGLMVFGLLLGGK). The Cytoplasmic portion of the chain corresponds to 277-291 (EFNERFKEKLPAPIP). The chain crosses the membrane as a helical span at residues 292–307 (LEFFAVVMGTGISAGF). Topologically, residues 308–332 (NLHESYSVDVVGTLPLGLLPPANPD) are extracellular. Residues 333 to 359 (TSLFHLVYVDAIAIAIVGFSVTISMAK) form a helical membrane-spanning segment. At 360–370 (TLANKHGYQVD) the chain is on the cytoplasmic side. A helical transmembrane segment spans residues 371–388 (GNQELIALGICNSIGSLF). The Extracellular portion of the chain corresponds to 389–396 (QTFSISCS). A helical membrane pass occupies residues 397 to 406 (LSRSLVQEGT). Ser398 is a binding site for salicylate. Over 407 to 410 (GGKT) the chain is Cytoplasmic. Residues 411-431 (QLAGCLASLMILLVILATGFL) form a helical membrane-spanning segment. The Extracellular segment spans residues 432–436 (FESLP). Residues 437–464 (QAVLSAIVIVNLKGMFMQFSDLPFFWRT) traverse the membrane as a helical segment. Residue Ser465 is a topological domain, cytoplasmic. A helical membrane pass occupies residues 466 to 481 (KIELTIWLTTFVSSLF). At 482–484 (LGL) the chain is on the extracellular side. A helical transmembrane segment spans residues 485 to 504 (DYGLITAVIIALLTVIYRTQ). The tract at residues 505–718 (SPSYTVLGQL…AVLGSQVREA (214 aa)) is extended region for STAS domain. Over 505 to 744 (SPSYTVLGQL…PNATPTTPEA (240 aa)) the chain is Cytoplasmic. An STAS domain is found at 525-713 (AYEEVKEIPG…HSIHDAVLGS (189 aa)). The segment at 720–744 (AEQETTVLPPQEDMEPNATPTTPEA) is disordered.

This sequence belongs to the SLC26A/SulP transporter (TC 2.A.53) family. In terms of assembly, homodimer. Interacts (via STAS domain) with CALM; this interaction is calcium-dependent and the STAS domain interacts with only one lobe of CALM which is an elongated conformation. Interacts with MYH1. Specifically expressed in outer hair cells of cochleae (at protein level). Not detected in other cells of the organ of Corti.

The protein localises to the lateral cell membrane. It carries out the reaction 2 hydrogencarbonate(in) + chloride(out) = 2 hydrogencarbonate(out) + chloride(in). With respect to regulation, salicylate, an inhibitor of outer hair cell motility, acts as a competitive antagonist at the prestin anion-binding site. Its function is as follows. Voltage-sensitive motor protein that drives outer hair cell (OHC) electromotility (eM) and participates in sound amplification in the hearing organ. Converts changes in the transmembrane electric potential into mechanical displacements resulting in the coupling of its expansion to movement of a charged voltage sensor across the lipid membrane. The nature of the voltage sensor is not completely clear, and two models compete. In the first model, acts as an incomplete transporter where intracellular chloride anion acts as extrinsic voltage sensor that drives conformational change in the protein which is sufficient to produce a length change in the plane of the membrane and hence in the length of the OHC. The second model in which multiple charged amino acid residues are distributed at the intracellular and extracellular membrane interfaces that form an intrinsic voltage sensor, whose movement produces the non-linear capacitance (NLC). However, the effective voltage sensor may be the result of a hybrid voltage sensor assembled from intrinsic charge (charged residues) and extrinsic charge (bound anion). Notably, binding of anions to the anion-binding pocket partially neutralizes the intrinsic positive charge rather than to form an electrically negative sensor, therefore remaining charge may serve as voltage sensor that, after depolarization, moves from down (expanded state) to up (contracted) conformation, which is accompanied by an eccentric contraction of the intermembrane cross-sectional area of the protein as well as a major increase in the hydrophobic thickness of the protein having as consequences the plasma membrane thickening and the cell contraction after membrane depolarization. The anion-binding pocket transits from the inward-open (Down) state, where it is exposed toward the intracellular solvent in the absence of anion, to the occluded (Up) state upon anion binding. Salicylate competes for the anion-binding site and inhibits the voltage-sensor movement, and therefore inhibits the charge transfer and electromotility by displacing Cl(-) from the anion-binding site and by preventing the structural transitions to the contracted state. In addition, can act as a weak Cl(-)/HCO3(-) antiporter across the cell membrane and so regulate the intracellular pH of the outer hair cells (OHCs), while firstly found as being unable to mediate electrogenic anion transport. Moreover, supports a role in cardiac mechanical amplification serving as an elastic element to enhance the actomyosin- based sarcomere contraction system. This Rattus norvegicus (Rat) protein is Prestin.